The sequence spans 222 residues: uncharacterized protein (222 aa).

Residues 1–27 (MSFTRRKFVLGMGTVIFFTGSASSLLA) constitute a signal peptide (tat-type signal). 4Fe-4S ferredoxin-type domains are found at residues 37 to 66 (YAMI…PAQG), 83 to 114 (TQYH…RDEQ), and 115 to 144 (GIVR…LNPV). [4Fe-4S] cluster is bound by residues Cys46, Cys49, Cys52, Cys56, Cys92, Cys95, Cys100, Cys104, Cys124, Cys127, Cys130, Cys134, Cys151, Cys154, Cys167, and Cys171.

Post-translationally, predicted to be exported by the Tat system. The position of the signal peptide cleavage has not been experimentally proven.

This is an uncharacterized protein from Escherichia coli O157:H7.